We begin with the raw amino-acid sequence, 1317 residues long: Toxin protein Tse5 (1317 aa).

The disordered stretch occupies residues Gly395–Tyr419. Positions Asp403 to Gly415 are enriched in basic and acidic residues.

Functionally, toxin secreted by the H1 type VI (H1-T6SS) secretion system that acts on bacterial target cells. The producing bacterium is protected by a cognate immunity protein. The protein is Toxin protein Tse5 of Pseudomonas aeruginosa (strain ATCC 15692 / DSM 22644 / CIP 104116 / JCM 14847 / LMG 12228 / 1C / PRS 101 / PAO1).